The chain runs to 143 residues: Large ribosomal subunit protein uL11 (143 aa).

Belongs to the universal ribosomal protein uL11 family. As to quaternary structure, part of the ribosomal stalk of the 50S ribosomal subunit. Interacts with L10 and the large rRNA to form the base of the stalk. L10 forms an elongated spine to which L12 dimers bind in a sequential fashion forming a multimeric L10(L12)X complex. Post-translationally, one or more lysine residues are methylated.

Functionally, forms part of the ribosomal stalk which helps the ribosome interact with GTP-bound translation factors. This Cellvibrio japonicus (strain Ueda107) (Pseudomonas fluorescens subsp. cellulosa) protein is Large ribosomal subunit protein uL11.